Consider the following 146-residue polypeptide: MNRFLSNATNRIDAKGRVSVPAAFRSVLTERNIQELYCFQDFVFPAISVGGLDLLDRFERQIAADDPFSPAANQMSLLIHGGGVFVRLDAEGRLMVTDFIRDFTGITNEVTFVGRADHFQLWQPEAFQALQAQAREERKLAGRRSE.

SpoVT-AbrB domains follow at residues 7-54 (NATN…GLDL) and 83-126 (GVFV…QPEA).

It belongs to the MraZ family. As to quaternary structure, forms oligomers.

It localises to the cytoplasm. The protein resides in the nucleoid. The protein is Transcriptional regulator MraZ of Rhizobium rhizogenes (strain K84 / ATCC BAA-868) (Agrobacterium radiobacter).